Here is a 130-residue protein sequence, read N- to C-terminus: MAKTDRSQPSVLARIAAFRTGLSAEASAADYLERQGYRILARRFKTRCGEIDLVAQRDALVAFVEVKARGNVDDAAYAVTPRQQSRIVAAAEAWLSRHPEHAMSELRFDAILIAPNTAPRHLPGAFDATP.

It belongs to the UPF0102 family.

The sequence is that of UPF0102 protein RPA0323 from Rhodopseudomonas palustris (strain ATCC BAA-98 / CGA009).